Consider the following 299-residue polypeptide: ATP phosphoribosyltransferase (299 aa).

This sequence belongs to the ATP phosphoribosyltransferase family. Long subfamily. As to quaternary structure, equilibrium between an active dimeric form, an inactive hexameric form and higher aggregates. Interconversion between the various forms is largely reversible and is influenced by the natural substrates and inhibitors of the enzyme. It depends on Mg(2+) as a cofactor.

The protein localises to the cytoplasm. The enzyme catalyses 1-(5-phospho-beta-D-ribosyl)-ATP + diphosphate = 5-phospho-alpha-D-ribose 1-diphosphate + ATP. Its pathway is amino-acid biosynthesis; L-histidine biosynthesis; L-histidine from 5-phospho-alpha-D-ribose 1-diphosphate: step 1/9. Its activity is regulated as follows. Feedback inhibited by histidine. Functionally, catalyzes the condensation of ATP and 5-phosphoribose 1-diphosphate to form N'-(5'-phosphoribosyl)-ATP (PR-ATP). Has a crucial role in the pathway because the rate of histidine biosynthesis seems to be controlled primarily by regulation of HisG enzymatic activity. This chain is ATP phosphoribosyltransferase, found in Blochmanniella pennsylvanica (strain BPEN).